The chain runs to 243 residues: Juxtaposed with another zinc finger protein 1 (243 aa).

The C2H2-type 1 zinc finger occupies 12 to 37; it reads NTCRFGGCGLHFPTLADLIEHIEDNH. The required for interaction with NR2C2 stretch occupies residues 39-79; that stretch reads DTDPRVLEKQELQQPTYVALSYINRFMTDAARREQESLKKK. A compositionally biased stretch (polar residues) spans 89-108; sequence SSSVSRGNVSTPPRHSSGSL. Residues 89 to 151 are disordered; that stretch reads SSSVSRGNVS…SDSDESWTTE (63 aa). A phosphothreonine mark is found at Thr-109 and Thr-113. The segment covering 118-130 has biased composition (low complexity); sequence PSSSFRSSTPTGS. Residues 131–148 are compositionally biased toward acidic residues; sequence EYDEEEVDYEESDSDESW. The C2H2-type 2 zinc-finger motif lies at 173–198; that stretch reads FACPVPGCKKRYKNVNGIKYHAKNGH. Residues 208-230 form a C2H2-type 3; degenerate zinc finger; that stretch reads FKCRCGKSYKTAQGLRHHTINFH.

Interacts with NR2C2 (via ligand-binding region). As to expression, highest expression in testis with moderate levels in colon, placenta, prostate and ovary and low levels in brain, spleen, liver and small intestine.

Its subcellular location is the nucleus. Acts as a transcriptional corepressor of orphan nuclear receptor NR2C2. Inhibits expression of the gluconeogenesis enzyme PCK2 through inhibition of NR2C2 activity. Also involved in transcriptional activation of NAMPT by promoting expression of PPARA and PPARD. Plays a role in lipid metabolism by suppressing lipogenesis, increasing lipolysis and decreasing lipid accumulation in adipose tissue. Plays a role in glucose homeostasis by improving glucose metabolism and insulin sensitivity. The chain is Juxtaposed with another zinc finger protein 1 from Homo sapiens (Human).